The primary structure comprises 225 residues: Uracil-DNA glycosylase (225 aa).

Asp-65 serves as the catalytic Proton acceptor.

The protein belongs to the uracil-DNA glycosylase (UDG) superfamily. UNG family.

The protein resides in the cytoplasm. The enzyme catalyses Hydrolyzes single-stranded DNA or mismatched double-stranded DNA and polynucleotides, releasing free uracil.. In terms of biological role, excises uracil residues from the DNA which can arise as a result of misincorporation of dUMP residues by DNA polymerase or due to deamination of cytosine. The polypeptide is Uracil-DNA glycosylase (Bacillus cereus (strain G9842)).